A 317-amino-acid polypeptide reads, in one-letter code: Beta-ketoacyl-[acyl-carrier-protein] synthase III (317 aa).

Residues C112 and H244 contribute to the active site. The interval 245–249 (QANLR) is ACP-binding. N274 is a catalytic residue.

Belongs to the thiolase-like superfamily. FabH family. In terms of assembly, homodimer.

It localises to the cytoplasm. The enzyme catalyses malonyl-[ACP] + acetyl-CoA + H(+) = 3-oxobutanoyl-[ACP] + CO2 + CoA. The protein operates within lipid metabolism; fatty acid biosynthesis. Its function is as follows. Catalyzes the condensation reaction of fatty acid synthesis by the addition to an acyl acceptor of two carbons from malonyl-ACP. Catalyzes the first condensation reaction which initiates fatty acid synthesis and may therefore play a role in governing the total rate of fatty acid production. Possesses both acetoacetyl-ACP synthase and acetyl transacylase activities. Its substrate specificity determines the biosynthesis of branched-chain and/or straight-chain of fatty acids. This Shigella sonnei (strain Ss046) protein is Beta-ketoacyl-[acyl-carrier-protein] synthase III.